The primary structure comprises 176 residues: HTH-type transcriptional regulator DctR (176 aa).

An HTH luxR-type domain is found at 109–174 (VPEADVSLSR…ELVRHQHINY (66 aa)). Positions 133–152 (TEDILEKLKISLKTFYCHKH) form a DNA-binding region, H-T-H motif.

May act as a transcriptional regulator of dctA. The sequence is that of HTH-type transcriptional regulator DctR (dctR) from Escherichia coli O6:H1 (strain CFT073 / ATCC 700928 / UPEC).